A 106-amino-acid polypeptide reads, in one-letter code: UPF0145 protein PFL_3418 (106 aa).

It belongs to the UPF0145 family.

The sequence is that of UPF0145 protein PFL_3418 from Pseudomonas fluorescens (strain ATCC BAA-477 / NRRL B-23932 / Pf-5).